The chain runs to 342 residues: Autoinducer 2 import system permease protein LsrC (342 aa).

Residues 1-13 are Periplasmic-facing; that stretch reads MLKFIQNNREITA. The helical transmembrane segment at 14–34 threads the bilayer; sequence LLAVVLLFVLPGFLDRQYLSV. Topologically, residues 35-38 are cytoplasmic; that stretch reads QTLT. The chain crosses the membrane as a helical span at residues 39–59; it reads MVYSSAQILILLAMGATLVML. The Periplasmic segment spans residues 60-69; that stretch reads TRNIDVSVGS. A helical transmembrane segment spans residues 70 to 90; that stretch reads ITGMCAVLLGMLLNAGYSLPV. Topologically, residues 91-92 are cytoplasmic; the sequence is AC. The chain crosses the membrane as a helical span at residues 93 to 113; it reads VATLLLGLLAGFFNGALVAWL. Residue lysine 114 is a topological domain, periplasmic. Residues 115 to 135 traverse the membrane as a helical segment; the sequence is IPAIVATLGTLGLYRGIMLLW. Residues 136–154 are Cytoplasmic-facing; the sequence is TGGKWIEGLPAELKQLSAP. Residues 155–175 traverse the membrane as a helical segment; that stretch reads LLLGISAIGWLTIILVAFMAW. At 176-212 the chain is on the periplasmic side; sequence LLAKTAFGRSFYATGDNLQGARQLGVRTEAIRIVAFS. The chain crosses the membrane as a helical span at residues 213 to 233; sequence LNGCMAALAGIVFASQIGFIL. Residues 234–251 lie on the Cytoplasmic side of the membrane; that stretch reads NQTGTGLEMKAIAACVLG. The helical transmembrane segment at 252–272 threads the bilayer; it reads GISLLGGSGAIIGAVLGAWFL. Topologically, residues 273–283 are periplasmic; sequence TQIDSVLVLLR. A helical transmembrane segment spans residues 284 to 304; sequence IPAWWNDFIAGLVLLAVLVFD. Over 305-342 the chain is Cytoplasmic; it reads GRLRCALERNLRRQKYARFMTPPPSVKPASSGKKREAA.

It belongs to the binding-protein-dependent transport system permease family. AraH/RbsC subfamily. As to quaternary structure, the complex is composed of two ATP-binding proteins (LsrA), two transmembrane proteins (LsrC and LsrD) and a solute-binding protein (LsrB).

It is found in the cell inner membrane. Its function is as follows. Part of the ABC transporter complex LsrABCD involved in autoinducer 2 (AI-2) import. Probably responsible for the translocation of the substrate across the membrane. This is Autoinducer 2 import system permease protein LsrC (lsrC) from Shigella flexneri.